The following is an 840-amino-acid chain: MTPPRPPSGRVRSLRDYSSESEKMDGTGSWDTLEWTKLDSTSGSGSFSNLSCLLESERVIVEGYGVVLINTDEAGTLLVTNFRILFLSEGTRKVIPLGTIPLATIEKFNKMVLKVQSSPRQSDKIPPRRLLQVTGKDMRIIVYGFRPRTKQRRNVFDALLKCTKPERVWDLYTFACGPSKFGNANPKERLLNEYFRLLGKSSIRASMDMIEDGAFTLSNELWRISDLNSNYNLCQTYPFAFMIPKSISDAELLQACSFRARCRLPVITWCQPGSGAVIARSSQPLVGLMMNMRSNLDEKLVAAFCSQLPGAKGERRKLYIADARPRKNALANGAMGGGSESSSNYFQSEIVFFGIDNIHAMRESFSRVRDYLDMHGTTSSDGRSSFLRHGGWTWGGGNLSSMSASVSLLGDSGWLIHIQSVLAGAAWIAARVAMESASVLVHCSDGWDRTTQLVSLACLLLDPYYRTFAGFQALVEKDWLAFGHPFSDRVGMPNISGSGNFDFPRQSSSAGSFPSSPVRQSSGSAASQSSSSSHGHNNYSPIFMQWIDSVSQLMRMYPCAFEFSPTFLVDFMDCLLSCRFGNFLCNSEKEREQCGIADACGCLWAYLTDLRSFSATSHVHCNPFYDPLKYDGPLLPPAASLAPTLWPQFHLRWACPEEAKAADIGVQCRAMTVKYSEMQKEKEAAERRVDEISFAMESLSAELLRERHLSWVARESANRATKEYAALTRAVQSLGCKINFTTSDVEDDPRSSLENNPRRRNRHGNNSDVSVSISLMPEENTSGNPKGRVCEALCPLRTREGVCRWPEVGCAHVGSQFVGLKANFDAFDRLAIYDSYFQPK.

Positions methionine 1–glycine 28 are disordered. The span at serine 13 to aspartate 25 shows a compositional bias: basic and acidic residues. One can recognise a GRAM domain in the interval glycine 45–valine 112. A Myotubularin phosphatase domain is found at glycine 199 to histidine 650. Substrate contacts are provided by residues asparagine 332 to methionine 335, asparagine 357 to isoleucine 358, cysteine 443 to arginine 449, and arginine 489. The active-site Phosphocysteine intermediate is cysteine 443. Residues glutamine 506–glycine 535 form a disordered region. Over residues serine 507–glycine 535 the composition is skewed to low complexity. Residues valine 666–leucine 734 are a coiled coil. Residues valine 745 to valine 771 form a disordered region.

The protein belongs to the protein-tyrosine phosphatase family. Non-receptor class myotubularin subfamily. Mostly expressed in siliques and leaves (including hydathodes), and, to a lower extent, in flowers and roots.

The protein localises to the cytoplasm. It localises to the endosome membrane. The enzyme catalyses a 1,2-diacyl-sn-glycero-3-phospho-(1D-myo-inositol-3-phosphate) + H2O = a 1,2-diacyl-sn-glycero-3-phospho-(1D-myo-inositol) + phosphate. It carries out the reaction a 1,2-diacyl-sn-glycero-3-phospho-(1D-myo-inositol-3,5-bisphosphate) + H2O = a 1,2-diacyl-sn-glycero-3-phospho-(1D-myo-inositol-5-phosphate) + phosphate. Its function is as follows. Phosphatase with phosphoinositide 3'-phosphatase activity that can use phosphatidylinositol-3-phosphate (PtdIns3P) and phosphatidylinositol-3,5-diphosphate (PtdIns3,5P(2)) as substrates and produces phosphatidylinositol-5-phosphate (PtdIns5P); participates in pathway(s) that transfer gene regulatory signals to the nucleus. Required for recovery after water deprivation, via the accumulation of PtdIns5P upon dehydration; high PtdIns5P levels mediate ATX1 cytoplasmic localization, thus down-regulating the expression of ATX1-dependent genes. Confers sensitivity to soil-water-deficit stress. The polypeptide is Phosphatidylinositol-3-phosphatase myotubularin-1 (MTM1) (Arabidopsis thaliana (Mouse-ear cress)).